Reading from the N-terminus, the 1370-residue chain is MAYSFTERKRIRKSFGTRDSVLEVPYLLQMQKDAYTAFLQADKEPRKRTIEGLQAAFDAAFPIVSHNGFVEMKFIEYNLARPAFDVRECQTRGLTFASAVRAKVQLIIYDRESSTSQSKVVKEVKEQEVYMGEVPLMTDKGSFIINGTERVIVSQLHRSPGVFFEHDKGKTHGSGKLLFSARIIPYRGSWLDFEFDPKDILYFRVDRRRKMPVTILLKAIGLNPESILANFFVNDNFRLMDSGAQMEFVPERLRGEVARFDITDKSGKLIVAKDKRVTARHTRDLEQSGSTHISVPEDFLVGRVVARTIVDADSGEILAKANDELTEALLKKLRSAAVRELQCIYTNELDQGAYISHTLRSDETVDEFAARVAIYRMMRPGEPPTEDAVQALFQRLFYNPDTYDLSRVGRMKFNARIGRDESTGPMVLSNEDILAVVKILVDLRNGNGEVDDIDHLGNRRVRCVGELAENQYRTGLARIEKAVKERLGQAEQEPLMPHDLINSKPISAALKEFFGASQLSQFMDQTNPLAEITHKRRVSALGPGGLTRERAGFEVRDVHVTHYGRVCPIETPEGPNIGLINSLALYARLNEYGFIETPYRRVVGGMVTNDIDYLSAIEEGKYVIAQANAVLDKEGRLTGDLVSAREKGESILCAADRVRYMDVSPAQIVSVAASLVPFLEHDDANRALMGANMSRQAVPVLRPEKPLVGTGIERVAAIDSGTVVTATRGGSVDYVDATRIVVRVNDDETVAGEVGVDIYNLIKYQRSNQNTNIHQRPIVKKGDRLVKGDVIADGASTDLGEIAIGQNMLIAFMPWNGYNFEDSILISERVVSEDRYTSIHIEELVVMARDTKLGAEEITRDIPNLSEQQLNRLDESGIIYVGAEVQPGDTLVGKVTPKGETTLTPEEKLLRAIFGEKASDVKDTSLRVEQGSQGTVIDVQVFTREGIARDKRAQQIIDDELKRFRLDLNDQLRIVEADAFERIEKLLLGRVANGGPHKLLKGAKIDKPYLSSVEKFHWFDIRPAQDEVAAQLELIKDALEQTRHSFDLAFEEKKKKLTQGDELPAGVLKMVKVYLAVKRRLQPGDKMAGRHGNKGVVSKIVPVEDMPYMADGTPADIVLNPLGVPSRMNIGQVLEVHLGWASKGIGQRIGDMLQQQAKAAELRKFLDKVYNARGRTEDLAQLCDEELVAMAAHLRHGMPYATPVFDGASEEEIKDMLKIAYPDEIAQRKGLTATRTQAFLYDGRTGERFERPTTIGYMHYLKLHHLVDDKMHARSTGPYSLVTQQPLGGKAQFGGQRFGEMEVWALEAYGAAYVLQEMLTVKSDDVAGRTKVYESIVKGEHAIEAGMPESFNVLVKEIRSLGLDIELERS.

The protein belongs to the RNA polymerase beta chain family. As to quaternary structure, the RNAP catalytic core consists of 2 alpha, 1 beta, 1 beta' and 1 omega subunit. When a sigma factor is associated with the core the holoenzyme is formed, which can initiate transcription.

The enzyme catalyses RNA(n) + a ribonucleoside 5'-triphosphate = RNA(n+1) + diphosphate. DNA-dependent RNA polymerase catalyzes the transcription of DNA into RNA using the four ribonucleoside triphosphates as substrates. This chain is DNA-directed RNA polymerase subunit beta, found in Verminephrobacter eiseniae (strain EF01-2).